A 70-amino-acid chain; its full sequence is Small ribosomal subunit protein bS21C (70 aa).

The protein belongs to the bacterial ribosomal protein bS21 family.

In Burkholderia pseudomallei (strain 1710b), this protein is Small ribosomal subunit protein bS21C.